A 134-amino-acid polypeptide reads, in one-letter code: Large ribosomal subunit protein uL16c (134 aa).

Belongs to the universal ribosomal protein uL16 family. As to quaternary structure, part of the 50S ribosomal subunit.

Its subcellular location is the plastid. The protein resides in the chloroplast. This is Large ribosomal subunit protein uL16c from Nephroselmis olivacea (Green alga).